Consider the following 306-residue polypeptide: Ornithine carbamoyltransferase (306 aa).

Carbamoyl phosphate contacts are provided by residues 51-54, Gln78, Arg102, and 129-132; these read STRT and HPVQ. L-ornithine is bound by residues Asn157, Asp221, and 225–226; that span reads SM. Carbamoyl phosphate-binding positions include 261 to 262 and Arg289; that span reads CL.

It belongs to the aspartate/ornithine carbamoyltransferase superfamily. OTCase family.

It localises to the cytoplasm. The enzyme catalyses carbamoyl phosphate + L-ornithine = L-citrulline + phosphate + H(+). Its pathway is amino-acid biosynthesis; L-arginine biosynthesis; L-arginine from L-ornithine and carbamoyl phosphate: step 1/3. Its function is as follows. Reversibly catalyzes the transfer of the carbamoyl group from carbamoyl phosphate (CP) to the N(epsilon) atom of ornithine (ORN) to produce L-citrulline. The sequence is that of Ornithine carbamoyltransferase from Campylobacter hominis (strain ATCC BAA-381 / DSM 21671 / CCUG 45161 / LMG 19568 / NCTC 13146 / CH001A).